We begin with the raw amino-acid sequence, 549 residues long: MDVVEVAGSWWAQEREDIIMKYEKGHRAGLPEDKGPKPFRSYNNNVDHLGIVHETELPPLTAREAKQIRREISRKSKWVDMLGDWEKYKSSRKLIDQAYKGMPMNIRGPMWSVLLNTEEMKLKNPGRYQIMKEKGKKSSEHIQRIDRDVSGTLRKHIFFRDRYGTKQRELLHILLAYEEYNPEVGYCRDLSHIAALFLLYLPEEDAFWALVQLLASERHSLQGFHSPNGGTVQGLQDQQEHVVATSQPKTMGHQDKKDLCGQCSPLGCLIRILIDGISLGLTLRLWDVYLVEGEQALMPITRIAFKVQQKRLTKTSRCGPWARFCNRFVDTWARDEDTVLKHLRASMKKLTRKKGDLPPPAKPEQGSSASRPVPASRGGKTLCKGDRQAPPGPPARFPRPIWSASPPRAPRSSTPCPGGAVREDTYPVGTQGVPSPALAQGGPQGSWRFLQWNSMPRLPTDLDVEGPWFRHYDFRQSCWVRAISQEDQLAPCWQAEHPAERVRSAFAAPSTDSDQGTPFRARDEQQCAPTSGPCLCGLHLESSQFPPGF.

One can recognise a Rab-GAP TBC domain in the interval 101–293 (GMPMNIRGPM…RLWDVYLVEG (193 aa)). 2 S-palmitoyl cysteine lipidation sites follow: Cys-318 and Cys-325. The segment at 350–419 (LTRKKGDLPP…PRSSTPCPGG (70 aa)) is disordered. The span at 398–417 (PRPIWSASPPRAPRSSTPCP) shows a compositional bias: low complexity.

Ubiquitinated by a CUL7-based E3 ligase, which leads to proteasomal degradation. Post-translationally, palmitoylation is required for membrane localization and protects TBC1D3 from ubiquitination. Expressed in pancreas, thymus and testis.

The protein resides in the cell membrane. Functionally, acts as a GTPase activating protein for RAB5. Does not act on RAB4 or RAB11. This Homo sapiens (Human) protein is TBC1 domain family member 3E.